We begin with the raw amino-acid sequence, 258 residues long: Spindlin-3 (258 aa).

Residues 1 to 23 (MKTPFGKAAAGQRSRTGAGHGSV) form a disordered region. Tudor-like domain stretches follow at residues 50–99 (VGCR…LELH), 129–178 (VGKA…YQLL), and 210–255 (VGKQ…YDLV). Histone H3K4me3 and H3R8me2a binding stretches follow at residues E138 and 246–248 (DFH).

Belongs to the SPIN/STSY family. In terms of assembly, interacts with C11orf84/SPINDOC.

Functionally, exhibits H3K4me3-binding activity. This is Spindlin-3 (SPIN3) from Pongo abelii (Sumatran orangutan).